Reading from the N-terminus, the 560-residue chain is DNA ligase B (560 aa).

Residue lysine 124 is the N6-AMP-lysine intermediate of the active site.

Belongs to the NAD-dependent DNA ligase family. LigB subfamily.

It carries out the reaction NAD(+) + (deoxyribonucleotide)n-3'-hydroxyl + 5'-phospho-(deoxyribonucleotide)m = (deoxyribonucleotide)n+m + AMP + beta-nicotinamide D-nucleotide.. Catalyzes the formation of phosphodiester linkages between 5'-phosphoryl and 3'-hydroxyl groups in double-stranded DNA using NAD as a coenzyme and as the energy source for the reaction. This chain is DNA ligase B, found in Escherichia coli (strain SMS-3-5 / SECEC).